The following is a 7094-amino-acid chain: Replicase polyprotein 1ab (7094 aa).

In terms of domain architecture, CoV Nsp1 globular spans 54–196; the sequence is PENHVMVDCR…PWVMYLRKCG (143 aa). The BetaCoV Nsp1 C-terminal domain maps to 216-246; sequence FKVEDAYDLVHDEPKGKFSKKAYALIRGYRG. Residues 250-519 form the CoV Nsp2 N-terminal domain; the sequence is LLYVDQYGCD…LICKALYLDY (270 aa). Zn(2+)-binding residues include C392, C397, C413, and C416. The C4 stretch occupies residues 392 to 416; that stretch reads CEQDLCDFKGWVPGNMIDGFACTTC. The region spanning 524-713 is the CoV Nsp2 middle domain; sequence CGNLHQRELL…AQAFRSVAKV (190 aa). A CoV Nsp2 C-terminal domain is found at 733–851; the sequence is RRRICLSGSK…LDQAWRVPCA (119 aa). Positions 853–966 constitute a Ubiquitin-like 1 domain; that stretch reads RRVTFKEQPT…LYCAFTAPED (114 aa). The region spanning 1036 to 1274 is the Peptidase C16 1 domain; it reads DLESVIQDYE…IAQLYGSCIT (239 aa). The For PL1-PRO activity role is filled by C1074. Positions 1151, 1154, 1177, and 1179 each coordinate Zn(2+). The C4-type 1 zinc-finger motif lies at 1151–1179; the sequence is CIKCDLALKLKGLDAMFFYGDVVSHVCKC. Residues H1225 and D1236 each act as for PL1-PRO activity in the active site. The Macro domain occupies 1275 to 1435; that stretch reads PNVCFVKGDI…LISKCQITAV (161 aa). The DPUP domain occupies 1491-1563; the sequence is DDARTFVQSN…VAQIKALFLD (73 aa). One can recognise a Ubiquitin-like 2 domain in the interval 1562–1617; the sequence is LDKVDILLTVDGVNFTNRFVPVGENFGKSLGNVFCDGVNVTKHKCDINYKGKVFFQ. One can recognise a Peptidase C16 2 domain in the interval 1631–1892; the sequence is SSFNFDQKEL…KIEYKPDLSQ (262 aa). C1671 (for PL2-PRO activity) is an active-site residue. Zn(2+) contacts are provided by C1749, C1751, C1783, and C1785. The C4-type 2 zinc-finger motif lies at 1749 to 1785; the sequence is CKCGVKQEQRTGVDAVMHFGTLSREDLEIGYTVDCSC. Active-site for PL2-PRO activity residues include H1828 and D1842. Positions 1906–2007 constitute a Nucleic acid-binding domain; the sequence is IKAQFKTFEK…TYFNRPLLVD (102 aa). One can recognise a G2M domain in the interval 2020–2169; sequence DDGGDISESD…ADNKVIYTTE (150 aa). Helical transmembrane passes span 2138–2158, 2199–2219, and 2227–2247; these read ISACFNFIKWLFVLLFGWIKI, ACIIATIFLLWFNFIYANVIF, and IGFLPTFVGKIAQWIKSTFSL. The interval 2138–2385 is HD1; that stretch reads ISACFNFIKW…ASFIKLFSLF (248 aa). Residues 2235–2296 form the 3Ecto domain; that stretch reads GKIAQWIKST…AIDVVQYEAD (62 aa). Intrachain disulfides connect C2251-C2275 and C2266-C2272. 3 helical membrane passes run 2313-2333, 2343-2363, and 2365-2385; these read LIVSYALYTAWFYPLFALISI, LFMLSTLHWSVRLLVSLANML, and AHVFMRFYIIIASFIKLFSLF. Residues 2383–2473 form a Y1 region; sequence SLFRHVAYGC…ELKRPIQPTD (91 aa). In terms of domain architecture, CoV Nsp3 Y spans 2383 to 2750; that stretch reads SLFRHVAYGC…LTTPFSLKGG (368 aa). Zn(2+) is bound by residues H2387, C2392, C2397, C2400, C2433, H2436, C2440, and C2443. Positions 2387–2400 are ZF1; that stretch reads HVAYGCSKPGCLFC. A ZF2 region spans residues 2433–2443; sequence CSKHQWNCIDC. Residues 2474–2566 form a Y2 region; that stretch reads VAYHTVTDVK…MVDKNLITTA (93 aa). Positions 2474-2750 are coV-Y; it reads VAYHTVTDVK…LTTPFSLKGG (277 aa). The tract at residues 2567–2649 is Y3; the sequence is NTGTSVTETM…DSVMSAVSAG (83 aa). Residues 2650-2750 are Y4; sequence LELTDESCNN…LTTPFSLKGG (101 aa). Helical transmembrane passes span 2752 to 2772, 2824 to 2844, 3009 to 3029, 3031 to 3051, 3063 to 3083, 3090 to 3110, and 3115 to 3135; these read VFSYFVYVCFLLSLVCFIGLW, STFGLSYYSNSMACPIVVAVV, VFDLIYQLFKGLAQPVDFLAL, ASSIAGAILAVIVVLVFYYLI, IVFVNVIVWCVNFMMLFVFQV, VYAICYFYATLYFPSEISVIM, and LVMYGTIMPLWFCLLYISVVV. The segment at 2752–3135 is HD2; it reads VFSYFVYVCF…FCLLYISVVV (384 aa). Residues 3149–3246 form the Nsp4C domain; the sequence is LGTSVRSDGT…TASVSTSFLQ (98 aa). Residues 3247–3549 enclose the Peptidase C30 domain; that stretch reads SGIVKMVNPT…YQQLAGIKLQ (303 aa). Active-site for 3CL-PRO activity residues include H3287 and C3391. The next 7 membrane-spanning stretches (helical) occupy residues 3558–3578, 3588–3608, 3614–3634, 3657–3677, 3684–3704, 3711–3731, and 3755–3775; these read GIVCWIMASTFLFSCIITAFV, TNMLSITFCALCVISLAMLLV, YLTMYIIPVLFTLLYNNYLVV, TYTDEVIYGMLLLIGMVFVTL, LFSFIMFVGRVISVVSLWYMG, ILLMLASLFGTYTWTTALSMA, and IVLVCYLFIGYIISCYWGLFS. The interval 3558–3775 is HD3; it reads GIVCWIMAST…IISCYWGLFS (218 aa). The region spanning 3837-3925 is the RdRp Nsp7 cofactor domain; sequence SKLTDVKCAN…DYAKDNTVLQ (89 aa). Residues 3926 to 4122 form the RdRp Nsp8 cofactor domain; that stretch reads ALQSEFVNMA…HNEVSATVLQ (197 aa). The Nsp9 ssRNA-binding domain maps to 4123–4232; it reads NNELMPAKLK…GTISSTVRLQ (110 aa). In terms of domain architecture, ExoN/MTase coactivator spans 4233–4370; it reads AGTATEYASN…CVSTDTTVQS (138 aa). C4306, C4309, H4315, C4322, C4348, C4351, C4359, and C4361 together coordinate Zn(2+). 2 zinc fingers span residues 4306-4322 and 4348-4361; these read CIYCRARVEHPDVDGLC and CQVCGFWRDGSCSC. The NiRAN domain occupies 4375-4630; it reads FLNRVRGTSV…DCELYVNNAY (256 aa). Mn(2+) is bound by residues N4578 and D4587. One can recognise a Nsp12 Interface domain in the interval 4631–4729; it reads RLFDLVQYDF…MNMDVDTHRY (99 aa). Positions 4660, 4666, 4671, 4675, and 4852 each coordinate Zn(2+). The 568-residue stretch at 4730 to 5297 folds into the Nsp12 RNA-dependent RNA polymerase domain; that stretch reads RLSLKDLLLY…NMYLRSAVMQ (568 aa). The interval 4732-4946 is rdRp Fingers N-ter; it reads SLKDLLLYAA…HQKCLKSIAA (215 aa). The rdRp Palm N-ter stretch occupies residues 4947–4985; the sequence is TRGVPVVIGTTKFYGGWDDMLRRLIKDVDNPVLMGWDYP. Residues 4977 to 5139 form the RdRp catalytic domain; that stretch reads PVLMGWDYPK…CYNSDYASKG (163 aa). Residues 4986-5044 are rdRp Fingers C-ter; that stretch reads KCDRAMPNILRIVSSLVLARKHEACCSQSDRFYRLANECAQVLSEIVMCGGCYYVKPGG. Zn(2+)-binding residues include H5007, C5010, and C5011. Positions 5045–5180 are rdRp Palm C-ter; it reads TSSGDATTAF…NNGPHEFCSQ (136 aa). Residues S5124, D5125, and D5126 contribute to the active site. Positions 5181–5297 are rdRp Thumb; the sequence is HTMLVKMDGD…NMYLRSAVMQ (117 aa). Residues 5298-5410 enclose the CV ZBD domain; sequence SVGACVVCSS…DDFNRIASCK (113 aa). The Zn(2+) site is built by C5302, C5305, C5313, C5316, C5323, C5326, H5330, H5336, C5347, C5352, C5369, and H5372. The region spanning 5553 to 5734 is the (+)RNA virus helicase ATP-binding domain; it reads SVLETFQNNV…MCCLGPDIFL (182 aa). Residue 5578–5585 coordinates ATP; sequence GPPGTGKS. The region spanning 5735–5904 is the (+)RNA virus helicase C-terminal domain; it reads GTCYRCPKEI…VETRVQCSTN (170 aa). One can recognise an ExoN domain in the interval 5971 to 6186; that stretch reads LFITKEEAVK…RCLAVYDCFC (216 aa). Active-site residues include D5989, E5991, and E6090. Residues C6106, C6109, C6125, H6128, H6156, C6160, and H6163 each coordinate Zn(2+). Residues H6167 and D6172 contribute to the active site. C6178 is a Zn(2+) binding site. The 227-residue stretch at 6195–6421 folds into the N7-MTase domain; it reads YPIISNELSI…NLWNTFTKLQ (227 aa). 6230 to 6236 lines the S-adenosyl-L-methionine pocket; the sequence is DIGNPKA. Positions 6308-6322 are gpppA-binding; sequence CNGGSLYVNKHAFHT. Zn(2+) contacts are provided by C6346, C6367, C6378, and H6381. The 61-residue stretch at 6422 to 6482 folds into the Nsp15 N-terminal oligomerization domain; sequence SLENVVYNLV…NVAVELFAKR (61 aa). An AV-Nsp11N/CoV-Nsp15M domain is found at 6483 to 6603; that stretch reads SIRHHPELKL…FAVRKEGQDV (121 aa). The NendoU domain maps to 6653–6792; it reads TCRTDMEKDF…NDEKVMTFYP (140 aa). Catalysis depends on residues H6683, H6698, K6738, K6841, D6925, K6965, and E6998. The 295-residue stretch at 6797–7091 folds into the Nidovirus-type SAM-dependent 2'-O-MTase domain; it reads ASDWKPGYSM…KEVFVGDSLV (295 aa).

It belongs to the coronaviruses polyprotein 1ab family. Interacts with host PHB and PHB2. As to quaternary structure, interacts with papain-like protease nsp3 and non-structural protein 6. In terms of assembly, monomer. Homodimer. Only the homodimer shows catalytic activity. Interacts with nsp8 and nsp12 to form the replication-transcription complex (RTC): nsp12, nsp7, two subunits of nsp8, and up to two subunits of nsp13. As to quaternary structure, interacts with nsp7, nsp13 and nsp12 to form the replication-transcription complex (RTC): nsp12, nsp7, two subunits of nsp8, and up to two subunits of nsp13. In terms of assembly, interacts with nsp12. Interacts with proofreading exoribonuclease nsp14 and 2'-O-methyltransferase nsp16; these interactions enhance nsp14 and nsp16 enzymatic activities. As to quaternary structure, interacts with nsp7 and nsp8 to form the replication-transcription complex (RTC): nsp12, nsp7, two subunits of nsp8, and up to two subunits of nsp13. Interacts with nsp9. In terms of assembly, interacts with nsp8 to form the replication-transcription complex (RTC): nsp12, nsp7, two subunits of nsp8, and up to two subunits of nsp13. Requires Mn(2+) as cofactor. The cofactor is Mg(2+). In terms of processing, specific enzymatic cleavages in vivo by its own proteases yield mature proteins. 3CL-PRO and PL-PRO proteinases are autocatalytically processed.

The protein resides in the host membrane. It is found in the host cytoplasm. Its subcellular location is the host perinuclear region. The protein localises to the host endoplasmic reticulum-Golgi intermediate compartment. It carries out the reaction RNA(n) + a ribonucleoside 5'-triphosphate = RNA(n+1) + diphosphate. The enzyme catalyses ATP + H2O = ADP + phosphate + H(+). The catalysed reaction is Thiol-dependent hydrolysis of ester, thioester, amide, peptide and isopeptide bonds formed by the C-terminal Gly of ubiquitin (a 76-residue protein attached to proteins as an intracellular targeting signal).. It catalyses the reaction a 5'-end (N(7)-methyl 5'-triphosphoguanosine)-ribonucleoside in mRNA + S-adenosyl-L-methionine = a 5'-end (N(7)-methyl 5'-triphosphoguanosine)-(2'-O-methyl-ribonucleoside) in mRNA + S-adenosyl-L-homocysteine + H(+). It carries out the reaction uridylyl-uridylyl-ribonucleotide-RNA = a 3'-end uridylyl-2',3'-cyclophospho-uridine-RNA + a 5'-end dephospho-ribonucleoside-RNA. The enzyme catalyses a 5'-end diphospho-ribonucleoside in mRNA + GTP + H(+) = a 5'-end (5'-triphosphoguanosine)-ribonucleoside in mRNA + diphosphate. The catalysed reaction is a 5'-end (5'-triphosphoguanosine)-ribonucleoside in mRNA + S-adenosyl-L-methionine = a 5'-end (N(7)-methyl 5'-triphosphoguanosine)-ribonucleoside in mRNA + S-adenosyl-L-homocysteine. In terms of biological role, the replicase polyprotein of coronaviruses is a multifunctional protein: it contains the activities necessary for the transcription of negative stranded RNA, leader RNA, subgenomic mRNAs and progeny virion RNA as well as proteinases responsible for the cleavage of the polyprotein into functional products. Inhibits host translation by interacting with the 40S ribosomal subunit. The nsp1-40S ribosome complex further induces an endonucleolytic cleavage near the 5'UTR of host mRNAs, targeting them for degradation. Viral mRNAs are not susceptible to nsp1-mediated endonucleolytic RNA cleavage thanks to the presence of a 5'-end leader sequence and are therefore protected from degradation. By suppressing host gene expression, nsp1 facilitates efficient viral gene expression in infected cells and evasion from host immune response. Functionally, may play a role in the modulation of host cell survival signaling pathway by interacting with host PHB and PHB2. Indeed, these two proteins play a role in maintaining the functional integrity of the mitochondria and protecting cells from various stresses. Its function is as follows. Responsible for the cleavages located at the N-terminus of the replicase polyprotein. In addition, PL-PRO possesses a deubiquitinating/deISGylating activity and processes both 'Lys-48'- and 'Lys-63'-linked polyubiquitin chains from cellular substrates. Participates together with nsp4 in the assembly of virally-induced cytoplasmic double-membrane vesicles necessary for viral replication. Antagonizes innate immune induction of type I interferon by blocking the phosphorylation, dimerization and subsequent nuclear translocation of host IRF3. Also prevents host NF-kappa-B signaling. In terms of biological role, participates in the assembly of virally-induced cytoplasmic double-membrane vesicles necessary for viral replication. Cleaves the C-terminus of replicase polyprotein at 11 sites. Recognizes substrates containing the core sequence [ILMVF]-Q-|-[SGACN]. Also able to bind an ADP-ribose-1''-phosphate (ADRP). Functionally, plays a role in the initial induction of autophagosomes from host endoplasmic reticulum. Later, limits the expansion of these phagosomes that are no longer able to deliver viral components to lysosomes. Its function is as follows. Forms a hexadecamer with nsp8 (8 subunits of each) that may participate in viral replication by acting as a primase. Alternatively, may synthesize substantially longer products than oligonucleotide primers. In terms of biological role, forms a hexadecamer with nsp7 (8 subunits of each) that may participate in viral replication by acting as a primase. Alternatively, may synthesize substantially longer products than oligonucleotide primers. Forms a primer, NSP9-pU, which is utilized by the polymerase for the initiation of RNA chains. Interacts with ribosome signal recognition particle RNA (SRP). Together with NSP8, suppress protein integration into the cell membrane, thereby disrupting host immune defenses. Functionally, plays a pivotal role in viral transcription by stimulating both nsp14 3'-5' exoribonuclease and nsp16 2'-O-methyltransferase activities. Therefore plays an essential role in viral mRNAs cap methylation. Its function is as follows. RNA-directed RNA polymerase that catalyzes the transcription of viral genomic and subgenomic RNAs. Acts in complex with nsp7 and nsp8 to transcribe both the minus and positive strands of genomic RNA. The kinase-like NiRAN domain of NSP12 attaches one or more nucleotides to the amino terminus of NSP9, forming a covalent RNA-protein intermediate that serves as transcription/replication primer. Subgenomic RNAs (sgRNAs) are formed by discontinuous transcription: The polymerase has the ability to pause at transcription-regulating sequences (TRS) and jump to the leader TRS, resulting in a major deletion. This creates a series of subgenomic RNAs that are replicated, transcribed and translated. In addition, Nsp12 is a subunit of the viral RNA capping enzyme that catalyzes the RNA guanylyltransferase reaction for genomic and sub-genomic RNAs. Subsequently, the NiRAN domain transfers RNA to GDP, and forms the core cap structure GpppA-RNA. In terms of biological role, multi-functional protein with a zinc-binding domain in N-terminus displaying RNA and DNA duplex-unwinding activities with 5' to 3' polarity. Activity of helicase is dependent on magnesium. Plays a role in viral RNA synthesis through two distinct activities. The N7-guanine methyltransferase activity plays a role in the formation of the cap structure GpppA-RNA. The proofreading exoribonuclease reduces the sensitivity of the virus to RNA mutagens during replication. This activity acts on both ssRNA and dsRNA in a 3'-5' direction. Functionally, plays a role in viral transcription/replication and prevents the simultaneous activation of host cell dsRNA sensors, such as MDA5/IFIH1, OAS, and PKR. Acts by degrading the 5'-polyuridines generated during replication of the poly(A) region of viral genomic and subgenomic RNAs. Catalyzes a two-step reaction in which a 2'3'-cyclic phosphate (2'3'-cP) is first generated by 2'-O transesterification, which is then hydrolyzed to a 3'-phosphate (3'-P). If not degraded, poly(U) RNA would hybridize with poly(A) RNA tails and activate host dsRNA sensors. Its function is as follows. Methyltransferase that mediates mRNA cap 2'-O-ribose methylation to the 5'-cap structure of viral mRNAs. N7-methyl guanosine cap is a prerequisite for binding of nsp16. Therefore plays an essential role in viral mRNAs cap methylation which is essential to evade immune system. In Bos taurus (Bovine), this protein is Replicase polyprotein 1ab (rep).